A 395-amino-acid chain; its full sequence is Acetate kinase (395 aa).

Mg(2+) is bound at residue Asn8. Residue Lys15 coordinates ATP. Position 89 (Arg89) interacts with substrate. The active-site Proton donor/acceptor is the Asp146. ATP-binding positions include His206–Gly210, Asp281–Arg283, and Gly329–Asn333. Glu382 provides a ligand contact to Mg(2+).

Belongs to the acetokinase family. As to quaternary structure, homodimer. The cofactor is Mg(2+). Requires Mn(2+) as cofactor.

The protein localises to the cytoplasm. It catalyses the reaction acetate + ATP = acetyl phosphate + ADP. The protein operates within metabolic intermediate biosynthesis; acetyl-CoA biosynthesis; acetyl-CoA from acetate: step 1/2. In terms of biological role, catalyzes the formation of acetyl phosphate from acetate and ATP. Can also catalyze the reverse reaction. This chain is Acetate kinase, found in Bacillus velezensis (strain DSM 23117 / BGSC 10A6 / LMG 26770 / FZB42) (Bacillus amyloliquefaciens subsp. plantarum).